The following is a 389-amino-acid chain: S-adenosylmethionine synthase (389 aa).

An ATP-binding site is contributed by histidine 17. Position 19 (aspartate 19) interacts with Mg(2+). K(+) is bound at residue glutamate 45. L-methionine contacts are provided by glutamate 58 and glutamine 101. Residues 101 to 111 (QSPDISQGVDG) are flexible loop. ATP contacts are provided by residues 170–172 (DSK), 237–238 (RF), aspartate 246, 252–253 (RK), alanine 269, and lysine 273. Residue aspartate 246 participates in L-methionine binding. Lysine 277 provides a ligand contact to L-methionine.

This sequence belongs to the AdoMet synthase family. As to quaternary structure, homotetramer; dimer of dimers. Requires Mg(2+) as cofactor. The cofactor is K(+).

The protein localises to the cytoplasm. The catalysed reaction is L-methionine + ATP + H2O = S-adenosyl-L-methionine + phosphate + diphosphate. It functions in the pathway amino-acid biosynthesis; S-adenosyl-L-methionine biosynthesis; S-adenosyl-L-methionine from L-methionine: step 1/1. Its function is as follows. Catalyzes the formation of S-adenosylmethionine (AdoMet) from methionine and ATP. The overall synthetic reaction is composed of two sequential steps, AdoMet formation and the subsequent tripolyphosphate hydrolysis which occurs prior to release of AdoMet from the enzyme. This chain is S-adenosylmethionine synthase, found in Treponema denticola (strain ATCC 35405 / DSM 14222 / CIP 103919 / JCM 8153 / KCTC 15104).